The chain runs to 216 residues: 3-keto-L-gulonate-6-phosphate decarboxylase UlaD (216 aa).

Residue Asp11 participates in substrate binding. Residues Glu33 and Asp62 each contribute to the Mg(2+) site. Substrate is bound at residue Arg192.

The protein belongs to the HPS/KGPDC family. KGPDC subfamily. As to quaternary structure, homodimer. Requires Mg(2+) as cofactor.

The catalysed reaction is 3-dehydro-L-gulonate 6-phosphate + H(+) = L-xylulose 5-phosphate + CO2. It participates in cofactor degradation; L-ascorbate degradation; D-xylulose 5-phosphate from L-ascorbate: step 2/4. In terms of biological role, catalyzes the decarboxylation of 3-keto-L-gulonate-6-P into L-xylulose-5-P. Is involved in the anaerobic L-ascorbate utilization. This is 3-keto-L-gulonate-6-phosphate decarboxylase UlaD from Escherichia coli O17:K52:H18 (strain UMN026 / ExPEC).